The sequence spans 275 residues: Ribosomal RNA small subunit methyltransferase A (275 aa).

Residues N28, L30, G55, E77, D103, and N123 each coordinate S-adenosyl-L-methionine.

It belongs to the class I-like SAM-binding methyltransferase superfamily. rRNA adenine N(6)-methyltransferase family. RsmA subfamily.

It localises to the cytoplasm. The catalysed reaction is adenosine(1518)/adenosine(1519) in 16S rRNA + 4 S-adenosyl-L-methionine = N(6)-dimethyladenosine(1518)/N(6)-dimethyladenosine(1519) in 16S rRNA + 4 S-adenosyl-L-homocysteine + 4 H(+). In terms of biological role, specifically dimethylates two adjacent adenosines (A1518 and A1519) in the loop of a conserved hairpin near the 3'-end of 16S rRNA in the 30S particle. May play a critical role in biogenesis of 30S subunits. The chain is Ribosomal RNA small subunit methyltransferase A from Rhizobium etli (strain CIAT 652).